A 484-amino-acid polypeptide reads, in one-letter code: Oxysterol-binding protein-related protein 2 (484 aa).

Phosphoserine occurs at positions 19 and 20. A disordered region spans residues 35 to 61 (DLDTSKSTRSGKNGEKPQQENGIQKHR). Residues lysine 90 and 178–179 (HH) contribute to the a 1,2-diacyl-sn-glycero-3-phospho-(1D-myo-inositol-4,5-bisphosphate) site. 2 stretches are compositionally biased toward basic and acidic residues: residues 319–340 (KQEK…EKAN) and 424–450 (SQEK…EWRT). Disordered regions lie at residues 319–348 (KQEK…GDVA) and 423–454 (ASQE…RWFS). 431–435 (EEKQR) contributes to the a 1,2-diacyl-sn-glycero-3-phospho-(1D-myo-inositol-4,5-bisphosphate) binding site.

The protein belongs to the OSBP family. As to quaternary structure, monomer. Homotetramer; phosphatidylinositol-4,5-bisphosphate binding promotes formation of stable tetramers. Interacts with DIAPH1. In terms of tissue distribution, detected in cochlea, in inner and outer hair cells in the organ of Corti (at protein level).

It is found in the cytoplasm. It localises to the cytosol. The protein resides in the lipid droplet. Its subcellular location is the cell membrane. Its function is as follows. Intracellular transport protein that binds sterols and phospholipids and mediates lipid transport between intracellular compartments. Increases plasma membrane cholesterol levels and decreases phosphatidylinositol-4,5-bisphosphate levels in the cell membrane. Binds phosphoinositides, such as phosphatidylinositol-4,5-bisphosphate. Exhibits strong binding to phosphatidic acid and weak binding to phosphatidylinositol 3-phosphate. Binds cholesterol, dehydroergosterol, 22(R)-hydroxycholesterol and 25-hydroxycholesterol (in vitro). In Mus musculus (Mouse), this protein is Oxysterol-binding protein-related protein 2 (Osbpl2).